The following is a 122-amino-acid chain: UPF0231 protein VSAL_I2591 (122 aa).

It belongs to the UPF0231 family.

The sequence is that of UPF0231 protein VSAL_I2591 from Aliivibrio salmonicida (strain LFI1238) (Vibrio salmonicida (strain LFI1238)).